The chain runs to 315 residues: Methionyl-tRNA formyltransferase (315 aa).

Position 113–116 (113–116) interacts with (6S)-5,6,7,8-tetrahydrofolate; sequence SILP.

Belongs to the Fmt family.

The catalysed reaction is L-methionyl-tRNA(fMet) + (6R)-10-formyltetrahydrofolate = N-formyl-L-methionyl-tRNA(fMet) + (6S)-5,6,7,8-tetrahydrofolate + H(+). Attaches a formyl group to the free amino group of methionyl-tRNA(fMet). The formyl group appears to play a dual role in the initiator identity of N-formylmethionyl-tRNA by promoting its recognition by IF2 and preventing the misappropriation of this tRNA by the elongation apparatus. In Aliivibrio fischeri (strain ATCC 700601 / ES114) (Vibrio fischeri), this protein is Methionyl-tRNA formyltransferase.